The chain runs to 478 residues: Cysteine protease ATG4B (478 aa).

Residues 1 to 15 show a composition bias toward polar residues; the sequence is MTSLPDRGVSSSSSD. Residues 1–20 are disordered; that stretch reads MTSLPDRGVSSSSSDPLCEG. Cysteine 164 functions as the Nucleophile in the catalytic mechanism. Residues aspartate 361 and histidine 363 contribute to the active site.

It belongs to the peptidase C54 family. Interacts with ATG8. In terms of tissue distribution, constitutively expressed.

It localises to the cytoplasm. The enzyme catalyses [protein]-C-terminal L-amino acid-glycyl-phosphatidylethanolamide + H2O = [protein]-C-terminal L-amino acid-glycine + a 1,2-diacyl-sn-glycero-3-phosphoethanolamine. Its function is as follows. Cysteine protease that plays a key role in autophagy by mediating both proteolytic activation and delipidation of ATG8 family proteins. The protease activity is required for proteolytic activation of ATG8 family proteins: cleaves the C-terminal amino acid of ATG8 proteins to reveal a C-terminal glycine. Exposure of the glycine at the C-terminus is essential for ATG8 proteins conjugation to phosphatidylethanolamine (PE) and insertion to membranes, which is necessary for autophagy. In addition to the protease activity, also mediates delipidation of PE-conjugated ATG8 proteins. The chain is Cysteine protease ATG4B (ATG4B) from Oryza sativa subsp. indica (Rice).